A 113-amino-acid polypeptide reads, in one-letter code: Hydrogenase maturation factor HypA (113 aa).

His2 provides a ligand contact to Ni(2+). Zn(2+) is bound by residues Cys73, Cys76, Cys89, and Cys92.

Belongs to the HypA/HybF family.

Its function is as follows. Involved in the maturation of [NiFe] hydrogenases. Required for nickel insertion into the metal center of the hydrogenase. This Rhodopseudomonas palustris (strain BisA53) protein is Hydrogenase maturation factor HypA.